A 1029-amino-acid chain; its full sequence is Probable E3 ubiquitin protein ligase C167.07c (1029 aa).

An IQ domain is found at 46 to 75; the sequence is AENNSVAVQSLSRGFLARRKFKQDFRERWI. The HECT domain occupies 692-1029; it reads FGKLLKGPIR…VRSGVGFGFS (338 aa). Residue Cys997 is the Glycyl thioester intermediate of the active site.

The protein resides in the cytoplasm. The protein localises to the nucleus. The catalysed reaction is S-ubiquitinyl-[E2 ubiquitin-conjugating enzyme]-L-cysteine + [acceptor protein]-L-lysine = [E2 ubiquitin-conjugating enzyme]-L-cysteine + N(6)-ubiquitinyl-[acceptor protein]-L-lysine.. Its function is as follows. Probable E3 ubiquitin-protein ligase which mediates ubiquitination and subsequent proteasomal degradation of target proteins. This is Probable E3 ubiquitin protein ligase C167.07c from Schizosaccharomyces pombe (strain 972 / ATCC 24843) (Fission yeast).